Here is a 438-residue protein sequence, read N- to C-terminus: 26S proteasome regulatory subunit 6A (438 aa).

A disordered region spans residues 1–24; sequence MSTLEELDALDQSQQGGSSNNEGL. The span at 11–22 shows a compositional bias: polar residues; sequence DQSQQGGSSNNE. ATP is bound at residue 226–233; sequence GPPGTGKT.

This sequence belongs to the AAA ATPase family.

The protein localises to the cytoplasm. The protein resides in the nucleus. Its function is as follows. The 26S proteasome is involved in the ATP-dependent degradation of ubiquitinated proteins. The regulatory (or ATPase) complex confers ATP dependency and substrate specificity to the 26S complex. The polypeptide is 26S proteasome regulatory subunit 6A (tbp1) (Schizosaccharomyces pombe (strain 972 / ATCC 24843) (Fission yeast)).